The chain runs to 373 residues: MSNEAKKHARTTVAVLYGGQSTEHSVSCISAGAVIDHLDPEIYEVVPVGITEAGAWVPGTTDTSRLRADGRDMPRVEDGGVHVQLTFGGAGTAGSAGSGAAGEMRYVTGPQAGEVFAQVDVVFPVLHGVNGEDGTVQGVLDLAGVRYVGNGVLASAAGMDKDFTKRLAREAGIPVGEELILFQPRELTAEEKERLGLPVFVKPARGGSSIGISKVDSWEEFDAAIDLAFSNDNKVIVEAMIHGAEVECGVLQHADGSIVSSVPAMLNGTEDGAEGFYGFDAKYVDSTVSATIPAPLPAETIKEIRQLAIRTFNALGCDGIARVDFFATENGPVLNEINTMPGFTPISMYPKMFAAEGVSFGDLVSALIARALA.

Residues 165–369 (KRLAREAGIP…FGDLVSALIA (205 aa)) enclose the ATP-grasp domain. 192 to 247 (KERLGLPVFVKPARGGSSIGISKVDSWEEFDAAIDLAFSNDNKVIVEAMIHGAEVE) is a binding site for ATP. Mg(2+)-binding residues include Asp324, Glu336, and Asn338.

Belongs to the D-alanine--D-alanine ligase family. Mg(2+) serves as cofactor. It depends on Mn(2+) as a cofactor.

The protein localises to the cytoplasm. The enzyme catalyses 2 D-alanine + ATP = D-alanyl-D-alanine + ADP + phosphate + H(+). The protein operates within cell wall biogenesis; peptidoglycan biosynthesis. Its function is as follows. Cell wall formation. The chain is D-alanine--D-alanine ligase from Corynebacterium jeikeium (strain K411).